Reading from the N-terminus, the 201-residue chain is Transcriptional regulator GfcR (201 aa).

Belongs to the purine/pyrimidine phosphoribosyltransferase family. GfcR subfamily.

The sequence is that of Transcriptional regulator GfcR from Methanobrevibacter smithii (strain ATCC 35061 / DSM 861 / OCM 144 / PS).